The primary structure comprises 334 residues: L-lactate dehydrogenase B chain (334 aa).

Ala2 bears the N-acetylalanine mark. Lys7 carries the post-translational modification N6-acetyllysine. Phosphoserine occurs at positions 11 and 44. NAD(+) is bound by residues 30–58 (GQVG…LEDK) and Arg100. Lys58 carries the N6-acetyllysine modification. Position 107 (Arg107) interacts with substrate. Lys119 carries the N6-acetyllysine modification. Asn139 is a binding site for NAD(+). Substrate-binding residues include Asn139 and Arg170. Residue His194 is the Proton acceptor of the active site. Tyr240 carries the post-translational modification Phosphotyrosine. Position 249 (Thr249) interacts with substrate. Lys329 carries the post-translational modification N6-acetyllysine.

The protein belongs to the LDH/MDH superfamily. LDH family. In terms of assembly, homotetramer. Interacts with PTEN upstream reading frame protein MP31; the interaction leads to inhibition of mitochondrial lactate dehydrogenase activity, preventing conversion of lactate to pyruvate in mitochondria.

Its subcellular location is the cytoplasm. The protein resides in the mitochondrion inner membrane. The enzyme catalyses (S)-lactate + NAD(+) = pyruvate + NADH + H(+). It functions in the pathway fermentation; pyruvate fermentation to lactate; (S)-lactate from pyruvate: step 1/1. In terms of biological role, interconverts simultaneously and stereospecifically pyruvate and lactate with concomitant interconversion of NADH and NAD(+). In Mus musculus (Mouse), this protein is L-lactate dehydrogenase B chain (Ldhb).